The following is a 101-amino-acid chain: Small ribosomal subunit protein uS14 (101 aa).

The span at 1 to 11 (MAKKSSVEKNN) shows a compositional bias: basic and acidic residues. The tract at residues 1–22 (MAKKSSVEKNNRRQRMVKNAAA) is disordered. The span at 12–22 (RRQRMVKNAAA) shows a compositional bias: basic residues.

It belongs to the universal ribosomal protein uS14 family. Part of the 30S ribosomal subunit. Contacts proteins S3 and S10.

In terms of biological role, binds 16S rRNA, required for the assembly of 30S particles and may also be responsible for determining the conformation of the 16S rRNA at the A site. The sequence is that of Small ribosomal subunit protein uS14 from Afipia carboxidovorans (strain ATCC 49405 / DSM 1227 / KCTC 32145 / OM5) (Oligotropha carboxidovorans).